Reading from the N-terminus, the 147-residue chain is Leghemoglobin-1 (147 aa).

Positions 2 to 147 (SFTDKQEALV…LATAIKKAMS (146 aa)) constitute a Globin domain. 2 positions are modified to nitrated tyrosine: Y25 and Y30. S45 contacts heme b. S45 bears the Phosphoserine mark. O2 is bound at residue H62. Heme b is bound by residues K65, H94, and K97. Y135 is subject to Nitrated tyrosine.

This sequence belongs to the plant globin family. Monomer. Post-translationally, nitrated in effective nodules and particularly in hypoxic conditions; this mechanism may play a protective role in the symbiosis by buffering toxic peroxynitrite NO(2)(-). Nitration level decrease during nodule senescence. In terms of processing, phosphorylation at Ser-45 disrupts the molecular environment of its porphyrin ring oxygen binding pocket, thus leading to a reduced oxygen consumption and to the delivery of oxygen O(2) to symbiosomes. As to expression, root nodules.

It localises to the cytoplasm. The protein localises to the cytosol. The protein resides in the nucleus. In terms of biological role, leghemoglobin that reversibly binds oxygen O(2) through a pentacoordinated heme iron. In root nodules, facilitates the diffusion of oxygen to the bacteroids while preventing the bacterial nitrogenase from being inactivated by buffering dioxygen, nitric oxide and carbon monoxide, and promoting the formation of reactive oxygen species (ROS, e.g. H(2)O(2)). This role is essential for symbiotic nitrogen fixation (SNF). The sequence is that of Leghemoglobin-1 from Medicago sativa (Alfalfa).